The sequence spans 378 residues: Chaperone protein DnaJ (378 aa).

In terms of domain architecture, J spans 6–70; it reads DYYDVLGVSR…QKRQQYDQFG (65 aa). The CR-type zinc finger occupies 137-219; sequence GKTSEISYSR…CHGKGVKTQK (83 aa). Cys150, Cys153, Cys167, Cys170, Cys193, Cys196, Cys207, and Cys210 together coordinate Zn(2+). CXXCXGXG motif repeat units follow at residues 150–157, 167–174, 193–200, and 207–214; these read CEVCKGSG, CDKCGGSG, CDKCAGSG, and CHNCHGKG.

Belongs to the DnaJ family. Homodimer. Zn(2+) is required as a cofactor.

The protein localises to the cytoplasm. In terms of biological role, participates actively in the response to hyperosmotic and heat shock by preventing the aggregation of stress-denatured proteins and by disaggregating proteins, also in an autonomous, DnaK-independent fashion. Unfolded proteins bind initially to DnaJ; upon interaction with the DnaJ-bound protein, DnaK hydrolyzes its bound ATP, resulting in the formation of a stable complex. GrpE releases ADP from DnaK; ATP binding to DnaK triggers the release of the substrate protein, thus completing the reaction cycle. Several rounds of ATP-dependent interactions between DnaJ, DnaK and GrpE are required for fully efficient folding. Also involved, together with DnaK and GrpE, in the DNA replication of plasmids through activation of initiation proteins. The polypeptide is Chaperone protein DnaJ (Lactobacillus delbrueckii subsp. bulgaricus (strain ATCC BAA-365 / Lb-18)).